A 514-amino-acid chain; its full sequence is Exoglucanase 1 (514 aa).

The signal sequence occupies residues Met1–Ala17. Gln18 bears the Pyrrolidone carboxylic acid mark. The catalytic stretch occupies residues Gln18–Asn453. 10 disulfides stabilise this stretch: Cys21/Cys89, Cys36/Cys42, Cys67/Cys88, Cys78/Cys84, Cys155/Cys414, Cys189/Cys227, Cys193/Cys226, Cys247/Cys273, Cys255/Cys260, and Cys278/Cys348. Asn62 carries N-linked (GlcNAc) asparagine glycosylation. Glu229 (nucleophile) is an active-site residue. The active-site Proton donor/acceptor is the Glu234. The N-linked (GlcNAc...) (high mannose) asparagine glycan is linked to Asn287. N-linked (GlcNAc) asparagine glycosylation occurs at Asn401. Residues Asn401–Asn437 show a composition bias toward polar residues. Residues Asn401–Ser481 are disordered. Residues Pro454 to Pro478 are linker. Residues Pro460 to Thr479 show a composition bias toward low complexity. O-linked (Man) threonine glycosylation occurs at Thr462. Residues Thr463, Thr464, and Thr465 are each glycosylated (O-linked (Man...) threonine). An O-linked (Man) threonine glycan is attached at Thr470. Residues Thr471 and Thr472 are each glycosylated (O-linked (Man...) threonine). O-linked (Man) serine glycans are attached at residues Ser474 and Ser475. A CBM1 domain is found at Pro478–Leu514. Thr479 carries O-linked (Man) threonine glycosylation. 2 O-linked (Man) serine glycosylation sites follow: Ser481 and Ser492. 2 disulfides stabilise this stretch: Cys486–Cys503 and Cys497–Cys513.

It belongs to the glycosyl hydrolase 7 (cellulase C) family. N-glycosylated. A high mannose glycan is attached to Asn-287 (predominantly Man(8)GlcNAc(2)) and single GlcNAc occupancy is observed at Asn-62 and Asn-401 with some site heterogeneity depending on strains and fermentation conditions. Post-translationally, O-glycosylated. Within the linker domain, all 8 threonines are variably glycosylated with between at least one, and up to three, mannose residues per site. All serines in this domain are at least partially glycosylated with a single mannose residue. O-glycosylation of the cellulase linker provides protection from proteolysis. Linker glycans also contribute to binding affinity of cellobiohydrolases to cellulose.

Its subcellular location is the secreted. The enzyme catalyses Hydrolysis of (1-&gt;4)-beta-D-glucosidic linkages in cellulose and cellotetraose, releasing cellobiose from the non-reducing ends of the chains.. Functionally, exocellobiohydrolases (CBH) that catalyzes the hydrolysis of 1,4-beta-D-glucosidic bonds in cellulose to release the disaccharide cellobiose. The degradation of cellulose involves an interplay between different cellulolytic enzymes. Hydrolysis starts with endoglucanases (EGs), which cut internal beta-1,4-glucosidic bonds in cellulose to reduce the polymerization degree of the substrate and create new chain ends for exocellobiohydrolases (CBHs). The CBHs release the disaccharide cellobiose from the non-reducing end of the cellulose polymer chain. Finally, beta-1,4-glucosidases hydrolyze the cellobiose and other short cello-oligosaccharides into glucose units. In Hypocrea jecorina (strain ATCC 56765 / BCRC 32924 / NRRL 11460 / Rut C-30) (Trichoderma reesei), this protein is Exoglucanase 1 (cbh1).